We begin with the raw amino-acid sequence, 415 residues long: uncharacterized protein (415 aa).

[4Fe-4S] cluster contacts are provided by cysteine 66, cysteine 72, cysteine 75, and cysteine 149. Residues glutamine 249, phenylalanine 276, glutamate 296, and aspartate 344 each coordinate S-adenosyl-L-methionine. Cysteine 370 functions as the Nucleophile in the catalytic mechanism.

The protein belongs to the class I-like SAM-binding methyltransferase superfamily. RNA M5U methyltransferase family.

This is an uncharacterized protein from Brucella suis biovar 1 (strain 1330).